Here is a 442-residue protein sequence, read N- to C-terminus: Trigger factor (442 aa).

The 86-residue stretch at 165–250 (DDRVIIDFEG…LQKVMAPELP (86 aa)) folds into the PPIase FKBP-type domain.

It belongs to the FKBP-type PPIase family. Tig subfamily.

It is found in the cytoplasm. It catalyses the reaction [protein]-peptidylproline (omega=180) = [protein]-peptidylproline (omega=0). Involved in protein export. Acts as a chaperone by maintaining the newly synthesized protein in an open conformation. Functions as a peptidyl-prolyl cis-trans isomerase. This chain is Trigger factor, found in Coxiella burnetii (strain CbuK_Q154) (Coxiella burnetii (strain Q154)).